The primary structure comprises 62 residues: Potassium channel toxin alpha-KTx Tx773 (62 aa).

The N-terminal stretch at 1 to 18 is a signal peptide; sequence MQKLFIVLLLFCILRLDA. Disulfide bonds link Cys-28–Cys-46, Cys-33–Cys-59, and Cys-37–Cys-61.

This sequence belongs to the short scorpion toxin superfamily. Potassium channel inhibitor family. Alpha-KTx 23 subfamily. Expressed by the venom gland.

It localises to the secreted. Its function is as follows. May block potassium channels. In Buthus israelis (Israeli scorpion), this protein is Potassium channel toxin alpha-KTx Tx773.